The chain runs to 65 residues: MVSDAEIKRINELVKKSREEGLTEEEKLEQKALRQKYIDAVKLSLRANLDSIRYVEDLEENKPKQ.

It belongs to the UPF0291 family.

It localises to the cytoplasm. The sequence is that of UPF0291 protein BBR47_33060 from Brevibacillus brevis (strain 47 / JCM 6285 / NBRC 100599).